The following is a 354-amino-acid chain: Protein-glutamate methylesterase/protein-glutamine glutaminase 2 (354 aa).

Positions 3–120 constitute a Response regulatory domain; the sequence is RVVVVDDSMS…PADLADYARD (118 aa). A 4-aspartylphosphate modification is found at Asp54. The 191-residue stretch at 164-354 folds into the CheB-type methylesterase domain; that stretch reads ATRLSRVIAI…MGARLSEALQ (191 aa). Residues Ser176, His202, and Asp298 contribute to the active site.

Belongs to the CheB family. Post-translationally, phosphorylated by CheA. Phosphorylation of the N-terminal regulatory domain activates the methylesterase activity.

Its subcellular location is the cytoplasm. It catalyses the reaction [protein]-L-glutamate 5-O-methyl ester + H2O = L-glutamyl-[protein] + methanol + H(+). The catalysed reaction is L-glutaminyl-[protein] + H2O = L-glutamyl-[protein] + NH4(+). Functionally, involved in chemotaxis. Part of a chemotaxis signal transduction system that modulates chemotaxis in response to various stimuli. Catalyzes the demethylation of specific methylglutamate residues introduced into the chemoreceptors (methyl-accepting chemotaxis proteins or MCP) by CheR. Also mediates the irreversible deamidation of specific glutamine residues to glutamic acid. The protein is Protein-glutamate methylesterase/protein-glutamine glutaminase 2 of Burkholderia thailandensis (strain ATCC 700388 / DSM 13276 / CCUG 48851 / CIP 106301 / E264).